The sequence spans 132 residues: Large ribosomal subunit protein uL14 (132 aa).

This sequence belongs to the universal ribosomal protein uL14 family. In terms of assembly, part of the 50S ribosomal subunit. Forms a cluster with proteins L3 and L24e, part of which may contact the 16S rRNA in 2 intersubunit bridges.

Its function is as follows. Binds to 23S rRNA. Forms part of two intersubunit bridges in the 70S ribosome. This Archaeoglobus fulgidus (strain ATCC 49558 / DSM 4304 / JCM 9628 / NBRC 100126 / VC-16) protein is Large ribosomal subunit protein uL14.